A 196-amino-acid chain; its full sequence is MKVALFGGTFNPIHIGHLIMAQYVLNFSQVQKVIFVPNGHPPHKVEDVADAFDRFEMVKLSIEDNPYFDISDFEIKKSNPSWTIDTLEYFSSIYERVYFIIGSDNLSEIVKWYKAEEILKRYPLIVLPRERNLCAIKKEIEKLSSKYAQDITLIQMPVIDISSTEIRKLISQDKSIRYMVHPKVEEYIKRKGLFKR.

Belongs to the NadD family.

The catalysed reaction is nicotinate beta-D-ribonucleotide + ATP + H(+) = deamido-NAD(+) + diphosphate. The protein operates within cofactor biosynthesis; NAD(+) biosynthesis; deamido-NAD(+) from nicotinate D-ribonucleotide: step 1/1. Functionally, catalyzes the reversible adenylation of nicotinate mononucleotide (NaMN) to nicotinic acid adenine dinucleotide (NaAD). The chain is Probable nicotinate-nucleotide adenylyltransferase from Caldicellulosiruptor bescii (strain ATCC BAA-1888 / DSM 6725 / KCTC 15123 / Z-1320) (Anaerocellum thermophilum).